Consider the following 87-residue polypeptide: HssA/B-like protein 54 (87 aa).

It belongs to the hssA/B family.

In Dictyostelium discoideum (Social amoeba), this protein is HssA/B-like protein 54 (hssl54).